A 311-amino-acid chain; its full sequence is 4-hydroxy-tetrahydrodipicolinate synthase (311 aa).

Pyruvate is bound at residue threonine 51. Tyrosine 140 (proton donor/acceptor) is an active-site residue. Residue lysine 168 is the Schiff-base intermediate with substrate of the active site. Isoleucine 209 is a binding site for pyruvate.

It belongs to the DapA family. In terms of assembly, homotetramer; dimer of dimers.

It is found in the cytoplasm. The catalysed reaction is L-aspartate 4-semialdehyde + pyruvate = (2S,4S)-4-hydroxy-2,3,4,5-tetrahydrodipicolinate + H2O + H(+). Its pathway is amino-acid biosynthesis; L-lysine biosynthesis via DAP pathway; (S)-tetrahydrodipicolinate from L-aspartate: step 3/4. Its function is as follows. Catalyzes the condensation of (S)-aspartate-beta-semialdehyde [(S)-ASA] and pyruvate to 4-hydroxy-tetrahydrodipicolinate (HTPA). This is 4-hydroxy-tetrahydrodipicolinate synthase from Streptococcus gordonii (strain Challis / ATCC 35105 / BCRC 15272 / CH1 / DL1 / V288).